A 452-amino-acid polypeptide reads, in one-letter code: L-seryl-tRNA(Sec) selenium transferase (452 aa).

Lys-285 carries the post-translational modification N6-(pyridoxal phosphate)lysine.

Belongs to the SelA family. The cofactor is pyridoxal 5'-phosphate.

It localises to the cytoplasm. It catalyses the reaction L-seryl-tRNA(Sec) + selenophosphate + H(+) = L-selenocysteinyl-tRNA(Sec) + phosphate. It participates in aminoacyl-tRNA biosynthesis; selenocysteinyl-tRNA(Sec) biosynthesis; selenocysteinyl-tRNA(Sec) from L-seryl-tRNA(Sec) (bacterial route): step 1/1. Its function is as follows. Converts seryl-tRNA(Sec) to selenocysteinyl-tRNA(Sec) required for selenoprotein biosynthesis. The sequence is that of L-seryl-tRNA(Sec) selenium transferase from Aquifex aeolicus (strain VF5).